Here is a 379-residue protein sequence, read N- to C-terminus: Demethylspheroidene O-methyltransferase (379 aa).

S-adenosyl-L-methionine is bound by residues D235 and R279.

The protein belongs to the class I-like SAM-binding methyltransferase superfamily. Cation-independent O-methyltransferase family.

It catalyses the reaction demethylspheroidene + S-adenosyl-L-methionine = spheroidene + S-adenosyl-L-homocysteine + H(+). The protein operates within carotenoid biosynthesis; spheroidene biosynthesis. Its function is as follows. Methyltransferase that mediates the O-methylation of 1-hydroxy carotenoids. Converts hydroxyneurosporene to methoxyneurosporene or demethylspheroidene to spheroidene. Also able to produce spirilloxanthin. This is Demethylspheroidene O-methyltransferase (crtF) from Cereibacter sphaeroides (strain ATCC 17023 / DSM 158 / JCM 6121 / CCUG 31486 / LMG 2827 / NBRC 12203 / NCIMB 8253 / ATH 2.4.1.) (Rhodobacter sphaeroides).